Reading from the N-terminus, the 100-residue chain is uncharacterized protein (100 aa).

The interval 42 to 84 (PGEPWRTAGGIGEGGAGGDGAAAGGEGDVHGRPAGAEDGEDGA) is disordered. Gly residues predominate over residues 50-67 (GGIGEGGAGGDGAAAGGE).

This is an uncharacterized protein from Torque teno tamarin virus (isolate So-TTV2).